Here is a 260-residue protein sequence, read N- to C-terminus: Snake venom serine protease 2B (260 aa).

The N-terminal stretch at M1–A18 is a signal peptide. Residues Q19–L24 constitute a propeptide that is removed on maturation. One can recognise a Peptidase S1 domain in the interval V25–A251. Disulfide bonds link C31–C165, C52–C68, C102–C258, C144–C212, C176–C191, and C202–C227. Catalysis depends on H67, which acts as the Charge relay system. N101 and N105 each carry an N-linked (GlcNAc...) asparagine glycan. D112 functions as the Charge relay system in the catalytic mechanism. N-linked (GlcNAc...) asparagine glycans are attached at residues N123 and N156. S206 serves as the catalytic Charge relay system.

The protein belongs to the peptidase S1 family. Snake venom subfamily. In terms of assembly, monomer. Expressed by the venom gland.

It is found in the secreted. Functionally, snake venom serine protease that may act in the hemostasis system of the prey. In Craspedocephalus gramineus (Bamboo pit viper), this protein is Snake venom serine protease 2B (TLG2B).